The primary structure comprises 175 residues: Large ribosomal subunit protein uL6 (175 aa).

It belongs to the universal ribosomal protein uL6 family. As to quaternary structure, part of the 50S ribosomal subunit.

Its function is as follows. This protein binds to the 23S rRNA, and is important in its secondary structure. It is located near the subunit interface in the base of the L7/L12 stalk, and near the tRNA binding site of the peptidyltransferase center. This chain is Large ribosomal subunit protein uL6, found in Xanthomonas campestris pv. campestris (strain 8004).